A 361-amino-acid polypeptide reads, in one-letter code: Phosphoserine aminotransferase (361 aa).

An L-glutamate-binding site is contributed by Arg43. Pyridoxal 5'-phosphate is bound by residues 77-78 (AS), Trp103, Thr153, Asp173, and Gln196. Lys197 carries the N6-(pyridoxal phosphate)lysine modification. Residue 238–239 (NT) participates in pyridoxal 5'-phosphate binding.

The protein belongs to the class-V pyridoxal-phosphate-dependent aminotransferase family. SerC subfamily. Homodimer. Requires pyridoxal 5'-phosphate as cofactor.

Its subcellular location is the cytoplasm. It carries out the reaction O-phospho-L-serine + 2-oxoglutarate = 3-phosphooxypyruvate + L-glutamate. It catalyses the reaction 4-(phosphooxy)-L-threonine + 2-oxoglutarate = (R)-3-hydroxy-2-oxo-4-phosphooxybutanoate + L-glutamate. It functions in the pathway amino-acid biosynthesis; L-serine biosynthesis; L-serine from 3-phospho-D-glycerate: step 2/3. The protein operates within cofactor biosynthesis; pyridoxine 5'-phosphate biosynthesis; pyridoxine 5'-phosphate from D-erythrose 4-phosphate: step 3/5. Functionally, catalyzes the reversible conversion of 3-phosphohydroxypyruvate to phosphoserine and of 3-hydroxy-2-oxo-4-phosphonooxybutanoate to phosphohydroxythreonine. This chain is Phosphoserine aminotransferase, found in Pseudomonas putida (strain ATCC 47054 / DSM 6125 / CFBP 8728 / NCIMB 11950 / KT2440).